We begin with the raw amino-acid sequence, 84 residues long: Phosphoribosylformylglycinamidine synthase subunit PurS (84 aa).

Belongs to the PurS family. As to quaternary structure, homodimer. Part of the FGAM synthase complex composed of 1 PurL, 1 PurQ and 2 PurS subunits.

It localises to the cytoplasm. It carries out the reaction N(2)-formyl-N(1)-(5-phospho-beta-D-ribosyl)glycinamide + L-glutamine + ATP + H2O = 2-formamido-N(1)-(5-O-phospho-beta-D-ribosyl)acetamidine + L-glutamate + ADP + phosphate + H(+). It participates in purine metabolism; IMP biosynthesis via de novo pathway; 5-amino-1-(5-phospho-D-ribosyl)imidazole from N(2)-formyl-N(1)-(5-phospho-D-ribosyl)glycinamide: step 1/2. Its function is as follows. Part of the phosphoribosylformylglycinamidine synthase complex involved in the purines biosynthetic pathway. Catalyzes the ATP-dependent conversion of formylglycinamide ribonucleotide (FGAR) and glutamine to yield formylglycinamidine ribonucleotide (FGAM) and glutamate. The FGAM synthase complex is composed of three subunits. PurQ produces an ammonia molecule by converting glutamine to glutamate. PurL transfers the ammonia molecule to FGAR to form FGAM in an ATP-dependent manner. PurS interacts with PurQ and PurL and is thought to assist in the transfer of the ammonia molecule from PurQ to PurL. The sequence is that of Phosphoribosylformylglycinamidine synthase subunit PurS from Methanothermobacter thermautotrophicus (strain ATCC 29096 / DSM 1053 / JCM 10044 / NBRC 100330 / Delta H) (Methanobacterium thermoautotrophicum).